We begin with the raw amino-acid sequence, 382 residues long: 4-hydroxy-3-methylbut-2-en-1-yl diphosphate synthase (flavodoxin) (382 aa).

Residues cysteine 273, cysteine 276, cysteine 308, and glutamate 315 each coordinate [4Fe-4S] cluster.

It belongs to the IspG family. The cofactor is [4Fe-4S] cluster.

It catalyses the reaction (2E)-4-hydroxy-3-methylbut-2-enyl diphosphate + oxidized [flavodoxin] + H2O + 2 H(+) = 2-C-methyl-D-erythritol 2,4-cyclic diphosphate + reduced [flavodoxin]. It functions in the pathway isoprenoid biosynthesis; isopentenyl diphosphate biosynthesis via DXP pathway; isopentenyl diphosphate from 1-deoxy-D-xylulose 5-phosphate: step 5/6. Its function is as follows. Converts 2C-methyl-D-erythritol 2,4-cyclodiphosphate (ME-2,4cPP) into 1-hydroxy-2-methyl-2-(E)-butenyl 4-diphosphate. The protein is 4-hydroxy-3-methylbut-2-en-1-yl diphosphate synthase (flavodoxin) of Gluconacetobacter diazotrophicus (strain ATCC 49037 / DSM 5601 / CCUG 37298 / CIP 103539 / LMG 7603 / PAl5).